We begin with the raw amino-acid sequence, 178 residues long: Large ribosomal subunit protein uL6 (178 aa).

It belongs to the universal ribosomal protein uL6 family. In terms of assembly, part of the 50S ribosomal subunit.

This protein binds to the 23S rRNA, and is important in its secondary structure. It is located near the subunit interface in the base of the L7/L12 stalk, and near the tRNA binding site of the peptidyltransferase center. This is Large ribosomal subunit protein uL6 from Corynebacterium jeikeium (strain K411).